Reading from the N-terminus, the 613-residue chain is Ethylene response sensor 1 (613 aa).

Transmembrane regions (helical) follow at residues 23–43 (ISDA…IYFV), 58–78 (FGAF…MFFM), and 95–115 (AVVS…LLSV). Residues Cys-65 and His-69 each coordinate Cu cation. The 150-residue stretch at 158-307 (DRHTILRTTL…NVADQVAVAL (150 aa)) folds into the GAF domain. Positions 350–589 (VMNHEMRTPM…SFIIRLGICN (240 aa)) constitute a Histidine kinase domain. The residue at position 353 (His-353) is a Phosphohistidine; by autocatalysis.

This sequence belongs to the ethylene receptor family. In terms of assembly, homodimer; disulfide-linked. Heteromer with ETR1. Requires Cu cation as cofactor. Post-translationally, autophosphorylated on both His and Ser residues in the presence of manganese. Loss of His autophosphorylation in the presence of both manganese and magnesium. Expressed in etiolated seedlings, leaves, stems, roots, flowers, embryos, anthers, carpels and ovules.

It localises to the endoplasmic reticulum membrane. The catalysed reaction is ATP + protein L-histidine = ADP + protein N-phospho-L-histidine.. Ethylene receptor related to bacterial two-component regulators. Acts as a redundant negative regulator of ethylene signaling. The chain is Ethylene response sensor 1 (ERS1) from Arabidopsis thaliana (Mouse-ear cress).